A 169-amino-acid polypeptide reads, in one-letter code: Phosphopantetheine adenylyltransferase (169 aa).

Threonine 13 provides a ligand contact to substrate. ATP is bound by residues 13–14 (TF) and histidine 21. Positions 45, 82, and 96 each coordinate substrate. Residues 97 to 99 (GLR), glutamate 107, and 132 to 138 (HQFISSR) each bind ATP.

It belongs to the bacterial CoaD family. As to quaternary structure, homohexamer. Requires Mg(2+) as cofactor.

It is found in the cytoplasm. It catalyses the reaction (R)-4'-phosphopantetheine + ATP + H(+) = 3'-dephospho-CoA + diphosphate. It functions in the pathway cofactor biosynthesis; coenzyme A biosynthesis; CoA from (R)-pantothenate: step 4/5. Reversibly transfers an adenylyl group from ATP to 4'-phosphopantetheine, yielding dephospho-CoA (dPCoA) and pyrophosphate. The chain is Phosphopantetheine adenylyltransferase from Acidiphilium cryptum (strain JF-5).